Consider the following 592-residue polypeptide: MKILIILLVFLNLITNINCAVCSSRLQVSDIKFANTHVLPIEGKSWKNNTVTLKILPNRESLLLAKFQDQTLSYTVKVWVDDSLMGKLTLNDPSKLPPTESNGTKYSTVHHSIRIPKDWMKPKMKIQFSTMLLKSEFFFPNIGHETNLNMWLLPFYLFGANDTNTQPLSVTGSISKDVSDELIQKWSLSSLNALNHPISRIDWSYLILPAGRNNLPGLRITNSDQKRDGYEIMSVVLGILSGIRGANGEGPSSVLYYAPLIHLGANGKYADPWGGLGGGSVGTGDYSYTGIFIHEAGHSYGLPHAGDSYKSGNYPYVDGSLLGSEWGFDMNHNEFLSVNIPSNIGAYKNCNKSFILDQNKNCVKQSVMQGGAGNQAQGYRYSMFADYEEVTIQNYFKDSIIYDKSFSTGYKKWNTTTLKYETYTPSTKSNGLYGINDGLPIERNVDVYTIIITHSFVGPANLSQIYPIFKSKGNLMPFFDPTNSTQLVDIRPNVSKYAWYCHANGCDYTIKITYTDGTTKYMLLQRGKRSWFSPSGAIGSGFTDPLSGESSLSVIFNIKADKTPSKIELFETLLGFNGFNSTTATLLVSQSF.

Positions 1–19 (MKILIILLVFLNLITNINC) are cleaved as a signal peptide. The Peptidase M66 domain maps to 140–402 (PNIGHETNLN…QNYFKDSIIY (263 aa)). Zn(2+) is bound at residue His294. The active site involves Glu295. 2 residues coordinate Zn(2+): His298 and His304.

It belongs to the dictomallein family. Zn(2+) serves as cofactor.

Its subcellular location is the secreted. This Dictyostelium discoideum (Social amoeba) protein is Dictomallein-1 (dtmlA).